A 534-amino-acid chain; its full sequence is Cytidylyl-2-hydroxyethylphosphonate methyltransferase (534 aa).

A B12-binding domain is found at 38 to 195 (KVLLLNPSAT…EHLNGNVSDD (158 aa)). The Radical SAM core domain occupies 268 to 496 (TVGSRVGQLY…TYKQGIINVP (229 aa)). Positions 282, 286, and 289 each coordinate [4Fe-4S] cluster.

This sequence belongs to the radical SAM superfamily. It depends on [4Fe-4S] cluster as a cofactor. Requires methylcob(III)alamin as cofactor.

The catalysed reaction is cytidine 5'-{[hydroxy(2-hydroxyethyl)phosphonoyl]phosphate} + AH2 + 2 S-adenosyl-L-methionine = cytidine 5'-({hydroxy[(S)-2-hydroxypropyl]phosphonoyl}phosphate) + 5'-deoxyadenosine + L-methionine + A + S-adenosyl-L-homocysteine + 2 H(+). The protein operates within antibiotic biosynthesis; fosfomycin biosynthesis. Involved in fosfomycin biosynthesis. Catalyzes the C-methylation of cytidylyl-2-hydroxyethylphosphonate (HEP-CMP) to form cytidylyl-2-hydroxypropylphosphonate (HPP-CMP). The C-methylation is not stereoselective and the ratio of (S)- to (R)-HPP-CMP is almost equal in vitro. The sequence is that of Cytidylyl-2-hydroxyethylphosphonate methyltransferase from Streptomyces wedmorensis.